Reading from the N-terminus, the 294-residue chain is NAD kinase (294 aa).

The active-site Proton acceptor is Asp74. NAD(+)-binding positions include 74-75, Arg79, 149-150, Asp179, 190-195, and Ala214; these read DG, NE, and TGYSMS.

The protein belongs to the NAD kinase family. It depends on a divalent metal cation as a cofactor.

The protein resides in the cytoplasm. The enzyme catalyses NAD(+) + ATP = ADP + NADP(+) + H(+). Involved in the regulation of the intracellular balance of NAD and NADP, and is a key enzyme in the biosynthesis of NADP. Catalyzes specifically the phosphorylation on 2'-hydroxyl of the adenosine moiety of NAD to yield NADP. This Flavobacterium psychrophilum (strain ATCC 49511 / DSM 21280 / CIP 103535 / JIP02/86) protein is NAD kinase.